Consider the following 1032-residue polypeptide: Vacuolar membrane protease (1032 aa).

At 1–11 (MKLGNPFVFRP) the chain is on the cytoplasmic side. A helical transmembrane segment spans residues 12–32 (GPVSFWTTIVYLAIIIPLIYV). Topologically, residues 33–415 (QETVPPAPSE…SAFALRGLFA (383 aa)) are vacuolar. Asn-50, Asn-138, and Asn-147 each carry an N-linked (GlcNAc...) asparagine glycan. The Zn(2+) site is built by His-194 and Asp-206. The active-site Proton acceptor is the Glu-240. Residues Glu-241, Glu-266, and His-339 each contribute to the Zn(2+) site. Residues 416 to 436 (WTLTLLITTPLVLFVVTYLLV) form a helical membrane-spanning segment. At 437–469 (RDDKWYFFATKVDSTVGDGEETVSFGGWKGFVR) the chain is on the cytoplasmic side. A helical transmembrane segment spans residues 470-490 (FPFALVVATALTIGSVFLLAK). The Vacuolar portion of the chain corresponds to 491–493 (VNP). Residues 494-514 (LIIYSSGYSVWAMMISLFYFV) traverse the membrane as a helical segment. Topologically, residues 515–532 (SWLLLRGAHFVRPSALQR) are cytoplasmic. A helical membrane pass occupies residues 533-553 (GFTLIWLFIITWVLSVFAAVA). The Vacuolar segment spans residues 554 to 560 (EDRMNMG). A helical transmembrane segment spans residues 561 to 581 (AVYPLAFLHTFAFAAVLISLL). Residues 582 to 701 (EQYALPAKQD…WSGRLPTWTW (120 aa)) lie on the Cytoplasmic side of the membrane. Residues 595-688 (QVSGENEEEE…RKRSFPPYEN (94 aa)) are disordered. Over residues 599 to 608 (ENEEEEEQEQ) the composition is skewed to acidic residues. Residues 651–660 (SSEQTTTFAN) are compositionally biased toward polar residues. Residues 702–722 (FIQLLLLVPLYVTVLGNLALV) traverse the membrane as a helical segment. The Vacuolar portion of the chain corresponds to 723-738 (QTTSIGKTGTDGSSLL). Residues 739–759 (APLMGVGILAILLLLPLTPFI) form a helical membrane-spanning segment. At 760–766 (HRVSHHV) the chain is on the cytoplasmic side. Residues 767–787 (PLFLFLVFIGTLIYNLTAFPF) form a helical membrane-spanning segment. The Vacuolar segment spans residues 788-1032 (SDNNRFKFYF…VEITKKIKVA (245 aa)). N-linked (GlcNAc...) asparagine glycosylation occurs at Asn-940.

The protein belongs to the peptidase M28 family. It depends on Zn(2+) as a cofactor.

Its subcellular location is the vacuole membrane. Functionally, may be involved in vacuolar sorting and osmoregulation. This is Vacuolar membrane protease from Metarhizium robertsii (strain ARSEF 23 / ATCC MYA-3075) (Metarhizium anisopliae (strain ARSEF 23)).